A 168-amino-acid chain; its full sequence is MGKCQAVFLLVGALCVLSLAGVANAAENHFKVQGMVYCDTCRIQFMTRVSTIMEGATVKLECRNITAGTQTFKAEAVTDKVGQYSIPVHGDFQDDICEIELVKSPNSECSEVSHDVYAKQSAKVSLTSNNGEASDIRSANALGFMRKEPLKECPEVLKELDLYDVKAN.

Positions 1 to 26 are cleaved as a signal peptide; the sequence is MGKCQAVFLLVGALCVLSLAGVANAA. 3 disulfides stabilise this stretch: Cys-38-Cys-109, Cys-41-Cys-153, and Cys-62-Cys-97. The N-linked (GlcNAc...) asparagine glycan is linked to Asn-64.

Belongs to the Ole e I family. Expressed in pollen.

Its subcellular location is the secreted. In Crocus sativus (Saffron), this protein is Pollen allergen Cro s 1.